The primary structure comprises 110 residues: Auxin-responsive protein SAUR71 (110 aa).

The protein belongs to the ARG7 family. As to expression, highly expressed in the steles of roots and hypocotyls.

It localises to the cytoplasm. Its function is as follows. Plays a role in the regulation of cell expansion, root meristem patterning and auxin transport. This is Auxin-responsive protein SAUR71 from Arabidopsis thaliana (Mouse-ear cress).